The sequence spans 624 residues: ERAD-associated E3 ubiquitin-protein ligase ASI1 (624 aa).

At 1–69 (MNSSTSSENV…SEEIPPTLRS (69 aa)) the chain is on the perinuclear space side. Residues Asn2, Asn19, and Asn29 are each glycosylated (N-linked (GlcNAc...) asparagine). A helical membrane pass occupies residues 70–90 (VFDTIGFFFSPYAIFCFVIAI). Residues 91 to 116 (VLNRFVVFYAVLNNGSRRTLPLWLSN) lie on the Nuclear side of the membrane. A helical membrane pass occupies residues 117–137 (VFHVSAVVVLAMVSLGPLTLG). The Perinuclear space segment spans residues 138–152 (KDFKILGDPAFAQEK). The helical transmembrane segment at 153-173 (FLLNIFYAFAYSYCVETIFTI) threads the bilayer. Over 174 to 209 (MRNSSPLEGTDYSLFELSIQFYTMTNNNTKFLDSPD) the chain is Nuclear. A helical membrane pass occupies residues 210-230 (YIIDCSMAILSRILIHLVEIF). At 231–273 (RLRNYRLLFSTIMNLCHICYLGIRVKQGGWKSLPFSVKFRHFP) the chain is on the perinuclear space side. A helical transmembrane segment spans residues 274–294 (KLFSVSIICLSLLIFKLSCLI). Topologically, residues 295–624 (RWDPFGKSRN…CKVHPVSDSK (330 aa)) are nuclear. The tract at residues 467-490 (TSDDEYSEDYEPSEVESLGDSDEE) is disordered. A compositionally biased stretch (acidic residues) spans 468-490 (SDDEYSEDYEPSEVESLGDSDEE). An RING-type; atypical zinc finger spans residues 568-608 (CAVCKVNERNTVLWPCRCFAICEDCRISLGLRGFSTCVCCR).

Component of the Asi complex, which contains ASI1, ASI2 and ASI3. Interacts directly with ASI3. Post-translationally, glycosylation is not required for ASI1 function.

Its subcellular location is the nucleus inner membrane. The catalysed reaction is S-ubiquitinyl-[E2 ubiquitin-conjugating enzyme]-L-cysteine + [acceptor protein]-L-lysine = [E2 ubiquitin-conjugating enzyme]-L-cysteine + N(6)-ubiquitinyl-[acceptor protein]-L-lysine.. Its function is as follows. E3 ubiquitin-protein ligase which transfers ubiquitin to substrates promoting their degradation. Part of the nuclear inner membrane (INM)-specific branch of the ER-associated degradation (ERAD) pathway, required for the elimination of misfolded proteins in the INM, a specialized ER subdomain. Required for ERG11 degradation. Negative regulator of SPS-sensor signaling. Together with ASI2 and ASI3, prevents the unprocessed precursor forms of STP1 and STP2 that escape cytoplasmic anchoring from inducing SPS-sensor-regulated genes in the absence of inducing signals. Controls amino acid permease (AAP) gene expression in response to amino acid availability, a process mediated by the transcription factors STP1 and STP1. The chain is ERAD-associated E3 ubiquitin-protein ligase ASI1 (ASI1) from Saccharomyces cerevisiae (strain ATCC 204508 / S288c) (Baker's yeast).